The primary structure comprises 520 residues: MAATEAVHHIHLQNFSRSLLETLNGQRLGGHFCDVTVRIREASLRAHRCVLAAGSPFFQDKLLLGHSEIRVPPVVPAQTVRQLVEFLYSGSLVVAQGEALQVLTAASVLRIQTVIDECTQIIARARVPNTPAPAPLPPPVPPPLAPAQLRHRLRHLLAARPPGHPNAAHSRKQRQPARLQLPAPPAPIKAEGPDAEPALTAAPEDRGEEDDDEETDEETDAEEGEGGGGGPGEGQAPPAFPDCAGGFLTTAADSAREDPPASTGITDYGGAGRDFLRGTGVTEDVFPDSYVSAWHEESSGGPESCPVETSAPPDCALAGPRPTGVKTPGPPVALFPFHLGAPGPPAPTPPTPSGPAPAPPPTFYPTLQPDAAPSAQLGETQAVPAAPAAQATAISGTPVRAPGGQGAEQPAYECSHCRKTFSSRKNYTKHMFIHSGEKPHQCAVCWRSFSLRDYLLKHMVTHTGVRAFQCAVCAKRFTQKSSLNVHMRTHRPERAPCPACGKVFSHRALLERHLAAHPAP.

A BTB domain is found at 33 to 96 (CDVTVRIREA…LYSGSLVVAQ (64 aa)). Disordered regions lie at residues 182–272 (PAPP…GGAG) and 337–372 (FHLG…PDAA). Residues 206 to 225 (RGEEDDDEETDEETDAEEGE) show a composition bias toward acidic residues. The span at 342–363 (PGPPAPTPPTPSGPAPAPPPTF) shows a compositional bias: pro residues. C2H2-type zinc fingers lie at residues 412 to 434 (YECS…MFIH), 440 to 462 (HQCA…MVTH), 468 to 490 (FQCA…MRTH), and 495 to 517 (APCP…LAAH).

The protein belongs to the krueppel C2H2-type zinc-finger protein family.

The protein resides in the nucleus. May be involved in transcriptional regulation. In the central nervous system, may play a role in glial cell differentiation. This is Zinc finger and BTB domain-containing protein 45 from Mus musculus (Mouse).